The chain runs to 1259 residues: Protein retinal degeneration B (1259 aa).

Residues 268–378 (GGGEECSDDS…SKGALHSPVG (111 aa)) are disordered. Phosphoserine is present on residues Ser-274 and Ser-277. A compositionally biased stretch (low complexity) spans 284–293 (STAATAASTT). Residues 318–335 (SSDEEGEEEEDDDEDEND) are compositionally biased toward acidic residues. Positions 347–363 (QGGSAQRSRSQSIQMAQ) are enriched in low complexity. Residues Ser-401, Ser-403, and Ser-434 each carry the phosphoserine modification. Disordered stretches follow at residues 427–454 (LLGE…GNSR), 472–500 (RGNK…STPS), and 660–692 (SQPG…NSRL). A compositionally biased stretch (low complexity) spans 663–678 (GTASGASNSGGDAATN). The span at 679 to 689 (INTHNPLSPRN) shows a compositional bias: polar residues. Positions 730–913 (LDFEVCDFFM…IAFILRQIGK (184 aa)) constitute a DDHD domain.

This sequence belongs to the PtdIns transfer protein family. PI transfer class IIA subfamily. In terms of tissue distribution, expressed in adult heads, not detected in bodies.

It carries out the reaction a 1,2-diacyl-sn-glycero-3-phospho-(1D-myo-inositol)(in) = a 1,2-diacyl-sn-glycero-3-phospho-(1D-myo-inositol)(out). It catalyses the reaction a 1,2-diacyl-sn-glycero-3-phosphate(in) = a 1,2-diacyl-sn-glycero-3-phosphate(out). In terms of biological role, catalyzes the transfer of phosphatidylinositol (PI) and phosphatidic acid (PA) between membranes. May control phosphatidylinositol concentration in transport vesicles from the subrhabdomeric cisternae (SRC) to the rhabdomere. May function as a calcium transporter. This is Protein retinal degeneration B (rdgB) from Drosophila melanogaster (Fruit fly).